We begin with the raw amino-acid sequence, 282 residues long: tRNA pseudouridine synthase A (282 aa).

The active-site Nucleophile is the aspartate 51. Tyrosine 109 provides a ligand contact to substrate.

It belongs to the tRNA pseudouridine synthase TruA family. As to quaternary structure, homodimer.

The enzyme catalyses uridine(38/39/40) in tRNA = pseudouridine(38/39/40) in tRNA. Its function is as follows. Formation of pseudouridine at positions 38, 39 and 40 in the anticodon stem and loop of transfer RNAs. The protein is tRNA pseudouridine synthase A of Delftia acidovorans (strain DSM 14801 / SPH-1).